Consider the following 148-residue polypeptide: uncharacterized protein (148 aa).

One can recognise an ABC transmembrane type-1 domain in the interval 25–148 (LSIGLIFSLI…YSITNIFIYN (124 aa)). The next 3 helical transmembrane spans lie at 26–46 (SIGL…PLII), 60–80 (IVII…STYI), and 127–147 (ITRV…IFIY).

The protein localises to the cell membrane. This is an uncharacterized protein from Staphylococcus epidermidis.